The chain runs to 483 residues: Phloretin 2'-O-glucosyltransferase (483 aa).

Residue H15 is the Proton acceptor of the active site. H15 contributes to the an anthocyanidin binding site. Residue D118 is the Charge relay of the active site. T140, A360, Q362, H377, W380, N381, S382, and E385 together coordinate UDP-alpha-D-glucose. Residue A400 coordinates an anthocyanidin. UDP-alpha-D-glucose-binding residues include E401 and Q402.

The protein belongs to the UDP-glycosyltransferase family. As to expression, highly expressed in roots and at lower levels in leaves, flowers and fruits.

It carries out the reaction phloretin + UDP-alpha-D-glucose = phlorizin + UDP + H(+). Functionally, glycosyltransferase that possesses phloretin 2'-O-glycosyltransferase activity. Converts phloretin to phlorizin (phloretin 2'-O-glucoside), a potent antioxidant. Is specific for phloretin and does not possess glycosyltransferase activity toward caffeic acid, catechin, chlorogenic acid, 2-coumaric acid, 3-coumaric acid, 4-coumaric acid, cyanidin, 3,4-dihydroxyhydrocinnamic acid, epicatechin, 3-hydroxybenzoic acid, naringenin, 3,4-dihydroxybenzoic acid, quercetin and rutin. Can glycosylate phloretin in the presence of UDP-glucose, UDP-xylose and UDP-galactose. In Malus domestica (Apple), this protein is Phloretin 2'-O-glucosyltransferase.